The sequence spans 201 residues: Probable DNA replication complex GINS protein PSF1 (201 aa).

It belongs to the GINS1/PSF1 family. In terms of assembly, component of the GINS complex which is a heterotetramer of gins1, gins2, gins3 and gins4.

The protein localises to the nucleus. Its function is as follows. The GINS complex plays an essential role in the initiation of DNA replication. The chain is Probable DNA replication complex GINS protein PSF1 from Caenorhabditis briggsae.